Consider the following 326-residue polypeptide: Probable major capsid protein gp17 (326 aa).

It belongs to the L5likevirus major capsid protein gp17 family. In terms of assembly, L5 head shells are composed of gp17 subunits that are extensively cross-linked.

It is found in the virion. The sequence is that of Probable major capsid protein gp17 (17) from Mycobacterium (Mycobacteriophage L5).